The chain runs to 163 residues: Nucleotide-binding protein YajQ (163 aa).

The protein belongs to the YajQ family.

Functionally, nucleotide-binding protein. This Salmonella agona (strain SL483) protein is Nucleotide-binding protein YajQ.